Reading from the N-terminus, the 200-residue chain is Large ribosomal subunit protein uL4 (200 aa).

Positions 42 to 69 (SKAQKNRSDVSGGGRKPWRQKGTGRARA) are disordered.

The protein belongs to the universal ribosomal protein uL4 family. Part of the 50S ribosomal subunit.

In terms of biological role, one of the primary rRNA binding proteins, this protein initially binds near the 5'-end of the 23S rRNA. It is important during the early stages of 50S assembly. It makes multiple contacts with different domains of the 23S rRNA in the assembled 50S subunit and ribosome. Functionally, forms part of the polypeptide exit tunnel. The sequence is that of Large ribosomal subunit protein uL4 from Alcanivorax borkumensis (strain ATCC 700651 / DSM 11573 / NCIMB 13689 / SK2).